The sequence spans 141 residues: Globin, extracellular monomeric (141 aa).

The region spanning 1 to 141 is the Globin domain; the sequence is ECDALQRFKV…LGVITGAIHD (141 aa). Cys2 and Cys131 are joined by a disulfide. His94 provides a ligand contact to heme b.

This sequence belongs to the globin family. As to quaternary structure, the giant hemoglobins of worms are formed of a monomeric subunit and a disulfide-bonded trimer. This subunit is monomeric.

It localises to the secreted. The protein is Globin, extracellular monomeric of Tubifex tubifex (Sludge worm).